A 612-amino-acid polypeptide reads, in one-letter code: MPDYRSKTSTHGRNMAGARALWRATGMKDEDFKKPIIAIANSFTQFVPGHVHLKDLGQLVAREIEKAGGVAKEFNTIAVDDGIAMGHDGMLYSLPSREIIADSVEYMVNAHCADAIVCISNCDKITPGMLMAALRLNIPVVFVSGGPMEAGKTKLASHGLDLVDAMVVAADDSCSDEKVAEYERSACPTCGSCSGMFTANSMNCLTEALGLSLPGNGSTLATHADREQLFLRAGRLAVELCQRYYGEGDDSVLPRNIANFKAFENAMTLDIAMGGSTNTILHLLAAAQEAEVPFDLRDIDRLSRKVPQLCKVAPNIQKYHMEDVHRAGGIFSILGELARGGLLHTDVATVHSPSMADAIARWDITQTRDEAVHTFFKAGPAGIPTQTAFSQNTRWPSLDDDRAEGCIRSVEHAYSKEGGLAVLYGNIALDGCVVKTAGVDESIHVFEGRAKIFESQDAAVKGILGDEVKAGDIVIIRYEGPKGGPGMQEMLYPTSYLKSKGLGKQCALLTDGRFSGGTSGLSIGHASPEAAAGGAIGLVQDGDKVLIDIPNRSINLLVSDEELAARRAEQDRKGWKPAAPRARRVSTALKAYALLATSADKGAVRNKALLDG.

D81 contacts Mg(2+). C122 is a [2Fe-2S] cluster binding site. Mg(2+) is bound by residues D123 and K124. K124 bears the N6-carboxylysine mark. Residue C193 participates in [2Fe-2S] cluster binding. E489 is a binding site for Mg(2+). The active-site Proton acceptor is S515.

Belongs to the IlvD/Edd family. As to quaternary structure, homodimer. The cofactor is [2Fe-2S] cluster. It depends on Mg(2+) as a cofactor.

The catalysed reaction is (2R)-2,3-dihydroxy-3-methylbutanoate = 3-methyl-2-oxobutanoate + H2O. It catalyses the reaction (2R,3R)-2,3-dihydroxy-3-methylpentanoate = (S)-3-methyl-2-oxopentanoate + H2O. It participates in amino-acid biosynthesis; L-isoleucine biosynthesis; L-isoleucine from 2-oxobutanoate: step 3/4. Its pathway is amino-acid biosynthesis; L-valine biosynthesis; L-valine from pyruvate: step 3/4. In terms of biological role, functions in the biosynthesis of branched-chain amino acids. Catalyzes the dehydration of (2R,3R)-2,3-dihydroxy-3-methylpentanoate (2,3-dihydroxy-3-methylvalerate) into 2-oxo-3-methylpentanoate (2-oxo-3-methylvalerate) and of (2R)-2,3-dihydroxy-3-methylbutanoate (2,3-dihydroxyisovalerate) into 2-oxo-3-methylbutanoate (2-oxoisovalerate), the penultimate precursor to L-isoleucine and L-valine, respectively. The polypeptide is Dihydroxy-acid dehydratase (Pseudomonas paraeruginosa (strain DSM 24068 / PA7) (Pseudomonas aeruginosa (strain PA7))).